We begin with the raw amino-acid sequence, 249 residues long: uncharacterized protein (249 aa).

The protein belongs to the chlamydial CPn_0206/CT203/TC_0475 family.

This is an uncharacterized protein from Chlamydia muridarum (strain MoPn / Nigg).